The primary structure comprises 411 residues: UPF0754 membrane protein Npun_R4433 (411 aa).

The next 2 helical transmembrane spans lie at 3 to 23 (WSHLWLYVSPPVLGGIIGYFT) and 387 to 407 (IVTLGGVLGFVIGLLQTVFLV).

It belongs to the UPF0754 family.

The protein localises to the cell inner membrane. This chain is UPF0754 membrane protein Npun_R4433, found in Nostoc punctiforme (strain ATCC 29133 / PCC 73102).